Here is a 459-residue protein sequence, read N- to C-terminus: Magnesium transporter MRS2-11, chloroplastic (459 aa).

A chloroplast-targeting transit peptide spans 1 to 62; it reads MALTPIPSTF…EALKVLSRSK (62 aa). The disordered stretch occupies residues 76–122; the sequence is GDYESLNVSDDDDGSDSNSSDGDNGGGRDDSKKIDSSSSSSSSDSTS. Basic and acidic residues predominate over residues 101-110; the sequence is GGRDDSKKID. Over residues 111–122 the composition is skewed to low complexity; it reads SSSSSSSSDSTS. 2 helical membrane passes run 397-417 and 430-450; these read LLLQ…GIFG and AFWL…FLMY. The Required for magnesium transport activity motif lies at 417 to 419; that stretch reads GMN.

This sequence belongs to the CorA metal ion transporter (MIT) (TC 1.A.35.5) family. As to expression, expressed in the green part of the plant. Preferentially expressed in the spongy mesophyll cells and stomata of young leaves but also detected in cotyledons and at the base of the leaf petioles.

The protein localises to the plastid. Its subcellular location is the chloroplast membrane. Its function is as follows. High-affinity magnesium transporter that mediates the influx of magnesium in chloroplast. The chain is Magnesium transporter MRS2-11, chloroplastic (MRS2-11) from Arabidopsis thaliana (Mouse-ear cress).